Here is a 154-residue protein sequence, read N- to C-terminus: MGNHCTRIPCCKKVCSCICCCNRRNKTQARSQKGSYFIKGKVHPVSRMEKWEEKITEANSHGKILVVNFKASWCLPSKTILPIYQELASTYTSMIFVTIDVEELAEFSHEWNVDATPTVVFLKDGRQMDKLVGGDAAELQKKTAAAANLLLRQS.

One can recognise a Thioredoxin domain in the interval 23-148 (RRNKTQARSQ…LQKKTAAAAN (126 aa)). A Phosphoserine modification is found at S31.

The protein belongs to the thioredoxin family. In terms of tissue distribution, ubiquitous.

The protein localises to the cytoplasm. In terms of biological role, possesses low disulfide reductase activity, but efficient protein disulfide isomerase activity. Does not possess deglutathionylation activity. The sequence is that of Thioredoxin-like protein CXXS2 (CXXS2) from Arabidopsis thaliana (Mouse-ear cress).